The following is an 868-amino-acid chain: Lysosomal cholesterol signaling protein (868 aa).

The Lumenal portion of the chain corresponds to 1-36 (MDSYFSAKNSTLAGDMNATWPASHGFNATGDPPSMS). Positions 1–368 (MDSYFSAKNS…SAWLLTFPTM (368 aa)) are PIN-like transporter. N-linked (GlcNAc...) asparagine glycosylation is found at Asn-9, Asn-17, and Asn-27. The helical transmembrane segment at 37–57 (ITRLFPALLECFGIVLCGYIA) threads the bilayer. The cholesterol site is built by Phe-41 and Tyr-55. Over 58–77 (GRANIITSTQAKGLGNFVSR) the chain is Cytoplasmic. Residues 78-98 (FALPALLFKNMVVLNFSNVDW) traverse the membrane as a helical segment. Residues 99 to 102 (AFLY) lie on the Lumenal side of the membrane. Residues 103 to 123 (SVLIGKASVFFIVCVLTLLVA) form a helical membrane-spanning segment. The Cytoplasmic segment spans residues 124-131 (SPESRFSK). Residues 132 to 152 (AGLFPIFATQSNDFALGYPIV) traverse the membrane as a discontinuously helical segment. Over 153 to 165 (EALYQSTYPEYLQ) the chain is Lumenal. A helical membrane pass occupies residues 166 to 186 (YIYLVAPISLMMLNPIGFIFC). Residues 187–211 (EIQKSKDTQNASQNKAKIVGLGFLR) are Cytoplasmic-facing. The chain crosses the membrane as a discontinuously helical span at residues 212 to 232 (VLQNPIVFMVFVGIAFNFILD). Over 233–241 (KKIPVYMEN) the chain is Lumenal. The chain crosses the membrane as a discontinuously helical span at residues 242-262 (FLDGLANSFSGSALFYLGLTM). At 263–271 (VGKIRRLKK) the chain is on the cytoplasmic side. Residues Gly-264, Lys-265, and Ile-266 each coordinate cholesterol. The helical transmembrane segment at 272–292 (SAFVVLTLLITAKLLVLPLLC) threads the bilayer. Residues 293–313 (REMVELLDKGDSVVNHTSLSN) are Lumenal-facing. The N-linked (GlcNAc...) asparagine glycan is linked to Asn-307. A discontinuously helical transmembrane segment spans residues 314 to 334 (YAFLYGVFPVAPGVAIFATQF). Over 335–344 (NMEVEIITSG) the chain is Cytoplasmic. A helical membrane pass occupies residues 345–365 (MVISTFVSAPIMYVSAWLLTF). The Lumenal portion of the chain corresponds to 366–379 (PTMDAKPLAYAIQN). The GPCR stretch occupies residues 378–715 (QNVSFDISII…FGIFGLDKHL (338 aa)). N-linked (GlcNAc...) asparagine glycosylation occurs at Asn-379. A helical membrane pass occupies residues 380-400 (VSFDISIISLVSLIWSLSILL). Residues 401 to 412 (LSKKYKQLPHML) are Cytoplasmic-facing. A helical transmembrane segment spans residues 413–433 (TANLLIAQTIVCAGMMIWNFV). Over 434–436 (KEK) the chain is Lumenal. The helical transmembrane segment at 437–457 (NFVGQILVFVLLYSSLYSTYL) threads the bilayer. Topologically, residues 458 to 478 (WTGLLAVSLFLLKKRESVQLP) are cytoplasmic. Residues 479–499 (VGIIIISGWGIPALLVGVLLI) form a helical membrane-spanning segment. Topologically, residues 500–518 (TGKHNGDSIDSAFFYGKEQ) are lumenal. A helical transmembrane segment spans residues 519–539 (MITTAVTLFCSILIAGVSLMC). The Cytoplasmic portion of the chain corresponds to 540–658 (MNRTTQAGHY…GDPQLTRHVL (119 aa)). The tract at residues 550 to 582 (EGFGQSQNHKPVEPGSTAFEENPAPTNEPELFP) is disordered. Residue Arg-655 coordinates cholesterol. The helical transmembrane segment at 659–679 (LCLLLIIGLFANLSSCLWWLF) threads the bilayer. Topologically, residues 680–689 (NHETGRLYVE) are lumenal. The chain crosses the membrane as a helical span at residues 690-710 (LQFFCAVFNFGQGFISFGIFG). Over 711-868 (LDKHLIILPF…SSPPSVSPKT (158 aa)) the chain is Cytoplasmic. A DEP domain is found at 755–833 (YHRDLCIRNI…DEYLFYRFLQ (79 aa)). The interval 836–868 (PEQSPPARTLRDHQEESYKEIGHSSPPSVSPKT) is disordered. Over residues 844-857 (TLRDHQEESYKEIG) the composition is skewed to basic and acidic residues.

As to quaternary structure, homodimer; via the transporter region and DEP domain. Interacts with the GATOR1 complex; preventing interaction between GATOR1 and KICSTOR; interaction is disrupted upon cholesterol starvation. Widely expressed in adult tissues and during development. In brain, widely distributed in forebrain regions, while it shows a more restricted distribution in the midbrain and hindbrain regions. Expressed at highest level in the lateral part of striatum and hippocampus.

It is found in the lysosome membrane. Functionally, cholesterol-binding protein that acts as a regulator of mTORC1 signaling pathway. Acts as a sensor of cholesterol to signal cholesterol sufficiency to mTORC1: in presence of cholesterol, binds cholesterol, leading to disruption of the interaction between the GATOR1 and KICSTOR complexes and promotion of mTORC1 signaling. Upon cholesterol starvation, GPR155/LYCHOS is unable to perturb the association between GATOR1 and KICSTOR, leading to mTORC1 signaling inhibition. Binds indole-3-acetic acid and may play a role in tryptophan metabolism. This Mus musculus (Mouse) protein is Lysosomal cholesterol signaling protein.